Here is a 1040-residue protein sequence, read N- to C-terminus: Multidrug resistance protein MdtB (1040 aa).

The next 12 membrane-spanning stretches (helical) occupy residues 25-45, 347-367, 369-389, 396-416, 440-460, 472-492, 537-557, 863-883, 888-908, 910-930, 968-988, and 998-1018; these read LLMAAILLAGIIGYRFLPVAA, LMLAIALVVMIIYLFLRNIPA, IIPGVAVPLSLIGTFAVMVFL, LTLMALTIATGFVVDDAIVVI, IGFTIISLTFSLIAVLIPLLF, FAVTLAVAILISAVVSLTLTP, WLTLSVAFATLLLSIMLWIVI, LGSTVWLIVAAVVAMYIVLGV, FIHPITILSTLPTAGVGALLA, IIAGSELDIIAIIGIILLIGI, ILMTTLAALLGALPLMLSTGV, and IAMVGGLLVSQVLTLFTTPVI.

Belongs to the resistance-nodulation-cell division (RND) (TC 2.A.6) family. MdtB subfamily. In terms of assembly, part of a tripartite efflux system composed of MdtA, MdtB and MdtC. MdtB forms a heteromultimer with MdtC.

It localises to the cell inner membrane. In Salmonella newport (strain SL254), this protein is Multidrug resistance protein MdtB.